A 130-amino-acid polypeptide reads, in one-letter code: MPYDYDLRCPCGTGLTYGQCCHRYHAGNHHAPTAEALMRSRFTAFAAGETDYLLDTWDPATRPAELTLDDRLEFYRLEILETEGGGPFDATGRVKFQAFHRGLADGVQEEDSTFRKMDGRWVYSLGDVAE.

Belongs to the UPF0225 family.

The polypeptide is UPF0225 protein CE1570 (Corynebacterium efficiens (strain DSM 44549 / YS-314 / AJ 12310 / JCM 11189 / NBRC 100395)).